Here is a 733-residue protein sequence, read N- to C-terminus: Phosphoribosylformylglycinamidine synthase subunit PurL (733 aa).

His-41 is an active-site residue. ATP is bound by residues Tyr-44 and Lys-83. Glu-85 contributes to the Mg(2+) binding site. Substrate contacts are provided by residues 86–89 (SHNH) and Arg-108. Residue His-87 is the Proton acceptor of the active site. Asp-109 contacts Mg(2+). The tract at residues 212–232 (GASFASQELSEESEEKRPSVQ) is disordered. Residue Gln-232 participates in substrate binding. Asp-260 is a Mg(2+) binding site. A substrate-binding site is contributed by 304 to 306 (ESQ). Residues Asp-488 and Gly-525 each contribute to the ATP site. Asn-526 contributes to the Mg(2+) binding site. Position 528 (Ser-528) interacts with substrate.

It belongs to the FGAMS family. As to quaternary structure, monomer. Part of the FGAM synthase complex composed of 1 PurL, 1 PurQ and 2 PurS subunits.

The protein localises to the cytoplasm. It catalyses the reaction N(2)-formyl-N(1)-(5-phospho-beta-D-ribosyl)glycinamide + L-glutamine + ATP + H2O = 2-formamido-N(1)-(5-O-phospho-beta-D-ribosyl)acetamidine + L-glutamate + ADP + phosphate + H(+). It participates in purine metabolism; IMP biosynthesis via de novo pathway; 5-amino-1-(5-phospho-D-ribosyl)imidazole from N(2)-formyl-N(1)-(5-phospho-D-ribosyl)glycinamide: step 1/2. Part of the phosphoribosylformylglycinamidine synthase complex involved in the purines biosynthetic pathway. Catalyzes the ATP-dependent conversion of formylglycinamide ribonucleotide (FGAR) and glutamine to yield formylglycinamidine ribonucleotide (FGAM) and glutamate. The FGAM synthase complex is composed of three subunits. PurQ produces an ammonia molecule by converting glutamine to glutamate. PurL transfers the ammonia molecule to FGAR to form FGAM in an ATP-dependent manner. PurS interacts with PurQ and PurL and is thought to assist in the transfer of the ammonia molecule from PurQ to PurL. The sequence is that of Phosphoribosylformylglycinamidine synthase subunit PurL from Thermoanaerobacter sp. (strain X514).